A 241-amino-acid chain; its full sequence is Protein unc-119 homolog B-B (241 aa).

The disordered stretch occupies residues 1 to 46 (MSGSNREAALAGQPKDERKKSGGGVINRLKARRVQGKESGTSDQSS). Tyrosine 132 is a tetradecanoate binding site.

Belongs to the PDE6D/unc-119 family.

It is found in the cell projection. Its subcellular location is the cilium. In terms of biological role, myristoyl-binding protein that acts as a cargo adapter: specifically binds the myristoyl moiety of a subset of N-terminally myristoylated proteins and is required for their localization. Plays a key role in localization of proteins to the primary cilium membrane. The protein is Protein unc-119 homolog B-B (unc119b-b) of Xenopus laevis (African clawed frog).